Reading from the N-terminus, the 305-residue chain is Glycine--tRNA ligase alpha subunit (305 aa).

This sequence belongs to the class-II aminoacyl-tRNA synthetase family. In terms of assembly, tetramer of two alpha and two beta subunits.

The protein resides in the cytoplasm. It carries out the reaction tRNA(Gly) + glycine + ATP = glycyl-tRNA(Gly) + AMP + diphosphate. The chain is Glycine--tRNA ligase alpha subunit from Streptococcus pneumoniae (strain ATCC 700669 / Spain 23F-1).